Reading from the N-terminus, the 164-residue chain is UPF0114 protein YqhA (164 aa).

Transmembrane regions (helical) follow at residues 15–35 (LLAPVYFGLSLALVALALKFF), 53–73 (LILVLLSLVDMTLVGGLLVMV), and 136–156 (LMWYVIIHLTFVLSAFVMGYL).

Belongs to the UPF0114 family.

The protein localises to the cell membrane. This chain is UPF0114 protein YqhA, found in Escherichia coli O139:H28 (strain E24377A / ETEC).